Consider the following 550-residue polypeptide: Arginine--tRNA ligase (550 aa).

The 'HIGH' region motif lies at 130–140 (ANPTGPIHIGG).

It belongs to the class-I aminoacyl-tRNA synthetase family. In terms of assembly, monomer.

Its subcellular location is the cytoplasm. The enzyme catalyses tRNA(Arg) + L-arginine + ATP = L-arginyl-tRNA(Arg) + AMP + diphosphate. The sequence is that of Arginine--tRNA ligase from Mycobacterium marinum (strain ATCC BAA-535 / M).